Consider the following 346-residue polypeptide: MTDQSQQFASDNYSGICPEAWAAMEKANHGHERAYGDDQWTARAADHFRKLFETDCEVFFAFNGTAANSLALSSLCQSYHSVICSETAHVETDECGAPEFFSNGSKLLTARSEGGKLTPASIREVALKRQDIHYPKPRVVTITQATEVGSVYRPDELKAISATCKELGLNLHMDGARFSNACAFLGCTPAELTWKAGIDVLCFGGTKNGMAVGEAILFFNRKLAEDFDYRCKQAGQLASKMRFLSAPWVGLLEDGAWLRHAAHANHCAQLLSSLVADIPGVELMFPVEANGVFLQMSEPALEALRNKGWRFYTFIGSGGARFMCSWDTEEARVRELAADIRAVMSA.

At Lys207 the chain carries N6-(pyridoxal phosphate)lysine.

The protein belongs to the threonine aldolase family. Homotetramer. The cofactor is pyridoxal 5'-phosphate.

It carries out the reaction L-threonine = acetaldehyde + glycine. The catalysed reaction is L-allo-threonine = acetaldehyde + glycine. Catalyzes the cleavage of L-allo-threonine and L-threonine to glycine and acetaldehyde. Can also act on L-erythro-phenylserine, L-threo-phenylserine, L-beta-3,4-methylenedioxyphenylserine and L-beta-3,4-dihydroxyphenylserine. The chain is Low specificity L-threonine aldolase (ltaE) from Pseudomonas sp. (strain NCIMB 10558).